The chain runs to 322 residues: RNA-binding protein KhpB (322 aa).

The interval 3-52 (VFEGNTVAAAIAAGLKQLHRTRDQVEVEVIAEAKKGFLGLGKHPAQVRLT) is jag_N domain. Residues 58 to 82 (AAPATTPTSATATAQQSVATESTTA) show a composition bias toward low complexity. Positions 58–162 (AAPATTPTSA…AADQSQTPRT (105 aa)) are disordered. Position 89 is a phosphothreonine (T89). Positions 89 to 99 (TVQTPKSTPTR) are enriched in polar residues. The span at 100–129 (QAKTSQATTSAAKPATSKAKAVAKPASMAV) shows a compositional bias: low complexity. Residues 141–161 (SKPATTSKTKSVAADQSQTPR) show a composition bias toward polar residues. One can recognise a KH domain in the interval 174–251 (ETAVRALCDY…ASHVNVVLDV (78 aa)). Positions 256–322 (ERRAATLKRL…HRAVVVAIRK (67 aa)) constitute an R3H domain.

Forms a complex with KhpA.

Its subcellular location is the cytoplasm. Functionally, a probable RNA chaperone. Forms a complex with KhpA which binds to cellular RNA and controls its expression. Plays a role in peptidoglycan (PG) homeostasis and cell length regulation. Necessary for correct cell elongation. The polypeptide is RNA-binding protein KhpB (Lactiplantibacillus plantarum (strain ATCC BAA-793 / NCIMB 8826 / WCFS1) (Lactobacillus plantarum)).